We begin with the raw amino-acid sequence, 518 residues long: 12S seed storage globulin 2 (518 aa).

An N-terminal signal peptide occupies residues 1–24 (MATTRFPSLLFYSYIFLLCNGSMA). 2 disulfides stabilise this stretch: Cys-45–Cys-78 and Cys-121–Cys-324. The Cupin type-1 1 domain maps to 50–240 (LQAFEPLRQV…ALGISQQVAQ (191 aa)). The interval 280 to 311 (IQSQEEQSTQYQVGQSPQYQEGQSTQYQPGQS) is disordered. Residues 330-479 (QNIENPKRAD…AYRISRQEAQ (150 aa)) form the Cupin type-1 2 domain. The interval 482–518 (KNNRGEEFDAFTPKFTQTGSQSYQDEGESSSTEKASE) is disordered. The segment covering 495 to 518 (KFTQTGSQSYQDEGESSSTEKASE) has biased composition (polar residues).

This sequence belongs to the 11S seed storage protein (globulins) family. In terms of assembly, hexamer; each subunit is composed of an acidic and a basic chain derived from a single precursor and linked by a disulfide bond.

Its function is as follows. This is a seed storage protein. The chain is 12S seed storage globulin 2 from Avena sativa (Oat).